The sequence spans 321 residues: Endochitinase 1 (321 aa).

The first 21 residues, 1–21 (MSFRALSVFSLFLSYLILGSA), serve as a signal peptide directing secretion. A Chitin-binding type-1 domain is found at 22–64 (EQCGRQAGGALCPGGLCCSQFGWCGNTDDYCKKENGCQSQCSG). 7 cysteine pairs are disulfide-bonded: cysteine 24/cysteine 39, cysteine 33/cysteine 45, cysteine 38/cysteine 52, cysteine 58/cysteine 62, cysteine 93/cysteine 156, cysteine 167/cysteine 175, and cysteine 274/cysteine 306. Positions 65–98 (SGGDTGGLDSLITRERFDQMLLHRNDGGCPARGF) are hinge. Residues 99 to 321 (YTYDAFIAAA…YNNGPSVDSM (223 aa)) are catalytic. Residue glutamate 137 is the Proton donor of the active site.

Belongs to the glycosyl hydrolase 19 family. Chitinase class I subfamily.

The protein resides in the vacuole. The enzyme catalyses Random endo-hydrolysis of N-acetyl-beta-D-glucosaminide (1-&gt;4)-beta-linkages in chitin and chitodextrins.. Functionally, defense against chitin-containing fungal pathogens. The chain is Endochitinase 1 (CHIA1) from Theobroma cacao (Cacao).